Consider the following 433-residue polypeptide: Bifunctional urease accessory protein UreEF (433 aa).

A urease accessory protein UreE region spans residues 1-200; sequence MKIANTFIKR…VMATAASTAS (200 aa). Positions 200–433 are urease accessory protein UreF; it reads SMTPSLDAGQ…ETQFSRLFRS (234 aa).

The protein in the N-terminal section; belongs to the UreE family. It in the C-terminal section; belongs to the UreF family. As to quaternary structure, ureD, UreF and UreG form a complex that acts as a GTP-hydrolysis-dependent molecular chaperone, activating the urease apoprotein by helping to assemble the nickel containing metallocenter of UreC. The UreE protein probably delivers the nickel.

The protein resides in the cytoplasm. Its function is as follows. Involved in urease metallocenter assembly. Binds nickel. Probably functions as a nickel donor during metallocenter assembly. Functionally, required for maturation of urease via the functional incorporation of the urease nickel metallocenter. This is Bifunctional urease accessory protein UreEF (ureEF) from Bordetella bronchiseptica (Alcaligenes bronchisepticus).